The primary structure comprises 108 residues: uncharacterized protein (108 aa).

It to M.jannaschii MJ1245 and M.thermoautotrophicum MTH1110.

This is an uncharacterized protein from Methanocaldococcus jannaschii (strain ATCC 43067 / DSM 2661 / JAL-1 / JCM 10045 / NBRC 100440) (Methanococcus jannaschii).